The primary structure comprises 694 residues: Elongation factor G (694 aa).

The tr-type G domain maps to 8 to 287 (EDYRNFGIMA…AVVEFLPAPT (280 aa)). GTP contacts are provided by residues 17 to 24 (AHIDAGKT), 86 to 90 (DTPGH), and 140 to 143 (NKMD).

Belongs to the TRAFAC class translation factor GTPase superfamily. Classic translation factor GTPase family. EF-G/EF-2 subfamily.

The protein resides in the cytoplasm. Functionally, catalyzes the GTP-dependent ribosomal translocation step during translation elongation. During this step, the ribosome changes from the pre-translocational (PRE) to the post-translocational (POST) state as the newly formed A-site-bound peptidyl-tRNA and P-site-bound deacylated tRNA move to the P and E sites, respectively. Catalyzes the coordinated movement of the two tRNA molecules, the mRNA and conformational changes in the ribosome. The sequence is that of Elongation factor G from Brucella melitensis biotype 2 (strain ATCC 23457).